A 356-amino-acid chain; its full sequence is Malate dehydrogenase, glyoxysomal (356 aa).

Residues 1–36 constitute a glyoxysome transit peptide; that stretch reads MEDAAAAARRMERLASHLRPPASQMEESPLLRGSNC. Residues 51-57 and D77 contribute to the NAD(+) site; that span reads GASGGIG. Residues R124 and R130 each coordinate substrate. NAD(+)-binding positions include N137 and 160–162; that span reads ISN. Substrate is bound by residues N162 and R196. H220 serves as the catalytic Proton acceptor. M271 is a binding site for NAD(+).

The protein belongs to the LDH/MDH superfamily. MDH type 1 family. Homodimer.

It localises to the glyoxysome. It catalyses the reaction (S)-malate + NAD(+) = oxaloacetate + NADH + H(+). In Oryza sativa subsp. japonica (Rice), this protein is Malate dehydrogenase, glyoxysomal.